Consider the following 329-residue polypeptide: tRNA (guanine(10)-N2)-dimethyltransferase (329 aa).

Residues 40-143 (NVENVEIFER…KLWIGIRIRE (104 aa)) enclose the THUMP domain.

The protein belongs to the methyltransferase superfamily. Trm-G10 family. As to quaternary structure, monomer.

The protein resides in the cytoplasm. The catalysed reaction is guanosine(10) in tRNA + 2 S-adenosyl-L-methionine = N(2)-dimethylguanosine(10) in tRNA + 2 S-adenosyl-L-homocysteine + 2 H(+). Catalyzes the adenosylmethionine-dependent methylation of the exocyclic amino group (N(2)) of guanosine at position 10 of various tRNAs. Acts via a two-step process that leads to the formation of either N(2)-monomethyl (m(2)G) or N(2)-dimethylguanosine (m(2)(2)G). The protein is tRNA (guanine(10)-N2)-dimethyltransferase (trmG10) of Pyrococcus abyssi (strain GE5 / Orsay).